The primary structure comprises 192 residues: 3-hydroxyanthranilate 3,4-dioxygenase 1 (192 aa).

Arginine 50 is a binding site for O2. The Fe cation site is built by histidine 54, glutamate 60, and histidine 102. A substrate-binding site is contributed by glutamate 60. Positions 106 and 116 each coordinate substrate. A divalent metal cation is bound by residues cysteine 131, cysteine 134, cysteine 168, and cysteine 171.

It belongs to the 3-HAO family. The cofactor is Fe(2+).

The protein localises to the cytoplasm. It catalyses the reaction 3-hydroxyanthranilate + O2 = (2Z,4Z)-2-amino-3-carboxymuconate 6-semialdehyde. It functions in the pathway cofactor biosynthesis; NAD(+) biosynthesis; quinolinate from L-kynurenine: step 3/3. Catalyzes the oxidative ring opening of 3-hydroxyanthranilate to 2-amino-3-carboxymuconate semialdehyde, which spontaneously cyclizes to quinolinate. This Aspergillus oryzae (strain ATCC 42149 / RIB 40) (Yellow koji mold) protein is 3-hydroxyanthranilate 3,4-dioxygenase 1 (bna1-1).